A 500-amino-acid chain; its full sequence is Probable cardiolipin synthase YwiE (500 aa).

The next 3 helical transmembrane spans lie at 6–26 (LEFF…FFPV), 31–51 (FYGG…SLIL), and 59–79 (TLLW…FYLF). PLD phosphodiesterase domains lie at 237-264 (LNFR…GKEY) and 413-440 (QKGF…DMRS). Active-site residues include His242, Lys244, Asp249, His418, Lys420, and Asp425.

The protein belongs to the phospholipase D family. Cardiolipin synthase subfamily.

It is found in the cell membrane. The catalysed reaction is 2 a 1,2-diacyl-sn-glycero-3-phospho-(1'-sn-glycerol) = a cardiolipin + glycerol. Functionally, catalyzes the reversible phosphatidyl group transfer from one phosphatidylglycerol molecule to another to form cardiolipin (CL) (diphosphatidylglycerol) and glycerol. May have a role in the heat shock response since the level of the transcript of ywiE increases after a heat shock. The polypeptide is Probable cardiolipin synthase YwiE (ywiE) (Bacillus subtilis (strain 168)).